The following is a 406-amino-acid chain: Argininosuccinate synthase (406 aa).

ATP contacts are provided by residues 11 to 19 (AYSGGLDTS) and A38. 2 residues coordinate L-citrulline: Y91 and S96. Residue G121 coordinates ATP. L-aspartate is bound by residues T123, N127, and D128. Position 127 (N127) interacts with L-citrulline. L-citrulline-binding residues include R131, S181, S190, E266, and Y278.

Belongs to the argininosuccinate synthase family. Type 1 subfamily. As to quaternary structure, homotetramer.

The protein localises to the cytoplasm. The enzyme catalyses L-citrulline + L-aspartate + ATP = 2-(N(omega)-L-arginino)succinate + AMP + diphosphate + H(+). Its pathway is amino-acid biosynthesis; L-arginine biosynthesis; L-arginine from L-ornithine and carbamoyl phosphate: step 2/3. The chain is Argininosuccinate synthase from Campylobacter jejuni subsp. jejuni serotype O:6 (strain 81116 / NCTC 11828).